The following is a 297-amino-acid chain: Lipoprotein NlpD/LppB homolog (297 aa).

The N-terminal stretch at 1–22 is a signal peptide; that stretch reads MDKGEGLRLAATLRQWTRLYGG. The N-palmitoyl cysteine moiety is linked to residue Cys-23. Residue Cys-23 is the site of S-diacylglycerol cysteine attachment. One can recognise a LysM domain in the interval 67 to 111; that stretch reads GQYIVRRGDTLYSIAFRFGWDWKALAARNGIAPPYTIQVGQAIQF. A disordered region spans residues 134-168; sequence TKPTPVPPAVSTSVPAKPAPAPASTTTPPSSGATP.

Belongs to the E.coli NlpD/Haemophilus LppB family.

Its subcellular location is the cell inner membrane. The chain is Lipoprotein NlpD/LppB homolog from Pseudomonas aeruginosa (strain ATCC 15692 / DSM 22644 / CIP 104116 / JCM 14847 / LMG 12228 / 1C / PRS 101 / PAO1).